Reading from the N-terminus, the 358-residue chain is Plancitoxin-1 (358 aa).

An N-terminal signal peptide occupies residues 1-26 (MPSSVIMFTFLALTVLTAVMVGTSEA). A glycan (N-linked (GlcNAc...) asparagine) is linked at N274. Residue H303 is part of the active site.

The protein belongs to the DNase II family. Plancitoxin is a heterodimer of alpha and beta subunits; disulfide-linked by a single disulfide bond. As to expression, venom gland.

The protein resides in the secreted. It catalyses the reaction Endonucleolytic cleavage to nucleoside 3'-phosphates and 3'-phosphooligonucleotide end-products.. Hydrolyzes DNA with an optimum pH of 7.2. Is potently hepatotoxic. It induces caspase-independent apoptosis (on rat liver cells) through the following procedure: binding to a specific receptor in the cytoplasmic membrane, entering the cell, entering the nucleus and degrading DNA. The chain is Plancitoxin-1 from Acanthaster planci (Crown-of-thorns starfish).